The primary structure comprises 99 residues: A-type ATP synthase subunit F (99 aa).

Belongs to the V-ATPase F subunit family. As to quaternary structure, has multiple subunits with at least A(3), B(3), C, D, E, F, H, I and proteolipid K(x).

It is found in the cell membrane. In terms of biological role, component of the A-type ATP synthase that produces ATP from ADP in the presence of a proton gradient across the membrane. This chain is A-type ATP synthase subunit F, found in Methanococcus maripaludis (strain C5 / ATCC BAA-1333).